A 186-amino-acid polypeptide reads, in one-letter code: Elongation factor P (186 aa).

Belongs to the elongation factor P family.

The protein resides in the cytoplasm. It participates in protein biosynthesis; polypeptide chain elongation. In terms of biological role, involved in peptide bond synthesis. Stimulates efficient translation and peptide-bond synthesis on native or reconstituted 70S ribosomes in vitro. Probably functions indirectly by altering the affinity of the ribosome for aminoacyl-tRNA, thus increasing their reactivity as acceptors for peptidyl transferase. The protein is Elongation factor P of Shewanella sp. (strain ANA-3).